A 381-amino-acid chain; its full sequence is Heterogeneous nuclear rnp K-like protein 2 (381 aa).

The segment at 1–34 (MSQFFEAATPVAIPTNNTNGGSSDAGSAATGGAP) is disordered. Low complexity predominate over residues 15–33 (TNNTNGGSSDAGSAATGGA). KH domains are found at residues 43-107 (TINH…IGDI), 156-221 (IGYV…LIEI), and 258-326 (NTRI…ESML). Residues 344-381 (LEAAEGDATVVTERSDSASFLEEKEEPQKNHDNKEEQS) are disordered. Phosphoserine is present on residues serine 358, serine 360, and serine 362. Residues 369–381 (EPQKNHDNKEEQS) show a composition bias toward basic and acidic residues.

The protein belongs to the HEK2 family. Binds RNA. Phosphorylated by the plasma membrane-Anchored casein kinase YCK1. Phosphorylation at its C-terminus reduces its RNA-binding capacity.

It is found in the cytoplasm. It localises to the P-body. The protein localises to the nucleus. Its subcellular location is the chromosome. The protein resides in the telomere. In terms of biological role, RNA-binding protein involved in the correct localization of transcripts in the cell. RNA localization is a widespread mechanism for achieving localized protein synthesis. Required for the asymmetric localization to the daughter cell nucleus of the ASH1 transcript, coding for a specific repressor of transcription. Overexpression inhibits translation of the ASH1 transcript. Involved in the stability of transcripts, like the MTL1 mRNA. Involved in structural and functional organization of telomeric chromatin and regulates silencing at the HMR locus. In Saccharomyces cerevisiae (strain JAY291) (Baker's yeast), this protein is Heterogeneous nuclear rnp K-like protein 2 (HEK2).